We begin with the raw amino-acid sequence, 201 residues long: CASP-like protein 2D1 (201 aa).

Over 1-26 (MRSGEGSTAAAAAAEEEKVKVAAPFR) the chain is Cytoplasmic. The helical transmembrane segment at 27 to 47 (LAELGLRVCAVPLAVASVWEM) threads the bilayer. The Extracellular segment spans residues 48–70 (ATNKQVDETYGEVRFSDLSGFRY). The chain crosses the membrane as a helical span at residues 71 to 91 (LVWINAITAAYSVASILLSSC). The Cytoplasmic segment spans residues 92–98 (RFITRFD). A helical membrane pass occupies residues 99–119 (WLIFILDQASAYLLLTSASAA). At 120 to 148 (AEVVYLAREGDREVSWGEVCSYFGRFCGA) the chain is on the extracellular side. The helical transmembrane segment at 149–169 (ATVSVALNAAALLCFMALSLI) threads the bilayer. The Cytoplasmic portion of the chain corresponds to 170 to 201 (SAFRVFTKFNPPSQSNSKQQLSQEQGKPVVSG). A compositionally biased stretch (polar residues) spans 180 to 194 (PPSQSNSKQQLSQEQ). Residues 180 to 201 (PPSQSNSKQQLSQEQGKPVVSG) form a disordered region.

It belongs to the Casparian strip membrane proteins (CASP) family. In terms of assembly, homodimer and heterodimers.

It is found in the cell membrane. The protein is CASP-like protein 2D1 of Oryza sativa subsp. indica (Rice).